Reading from the N-terminus, the 246-residue chain is CD99 antigen-like protein 2 (246 aa).

Residues 1-25 (MVARLTTLLVCLVFSLATLVQRGYG) form the signal peptide. Topologically, residues 26–160 (DFDDFNLEDA…PGSGAVTDPG (135 aa)) are extracellular. The interval 43 to 156 (KQSHFSTTTR…SQDDPGSGAV (114 aa)) is disordered. Composition is skewed to low complexity over residues 49–58 (TTTRRTGTTR) and 71–81 (TTTTTKRPGTT). Over residues 100–109 (DDRNDLDGPK) the composition is skewed to basic and acidic residues. The O-linked (Xyl...) (chondroitin sulfate) serine glycan is linked to serine 153. The chain crosses the membrane as a helical span at residues 161–181 (TIAGLVSALAAALLGAVSGYL). Residues 182-246 (SYQHRKFCFS…EPLAPERPRI (65 aa)) lie on the Cytoplasmic side of the membrane. Residues 223–246 (APPVTDSTQHSQPTEPLAPERPRI) are disordered. Positions 227-236 (TDSTQHSQPT) are enriched in polar residues.

The protein belongs to the CD99 family. In terms of processing, O-glycosylated. Expressed predominantly in the ventral medullary surface of the brain, moderate expression in the cerebral cortex and cerebellum. Low expression in lung and kidney. No expression in heart, stomach, intestine and skeletal muscle.

The protein localises to the cell membrane. It localises to the cell junction. Its subcellular location is the secreted. Plays a role in a late step of leukocyte extravasation helping cells to overcome the endothelial basement membrane. Acts at the same site as, but independently of, PECAM1. Homophilic adhesion molecule, but these interactions may not be required for cell aggregation. This chain is CD99 antigen-like protein 2 (Cd99l2), found in Rattus norvegicus (Rat).